Reading from the N-terminus, the 157-residue chain is Catabolic 3-dehydroquinase (157 aa).

Tyrosine 27 (proton acceptor) is an active-site residue. Substrate is bound by residues asparagine 80, histidine 86, and aspartate 93. Histidine 106 (proton donor) is an active-site residue. Substrate-binding positions include 107–108 and arginine 117; that span reads VS.

It belongs to the type-II 3-dehydroquinase family. In terms of assembly, homododecamer. Adopts a ring-like structure, composed of an arrangement of two hexameric rings stacked on top of one another.

The catalysed reaction is 3-dehydroquinate = 3-dehydroshikimate + H2O. It participates in aromatic compound metabolism; 3,4-dihydroxybenzoate biosynthesis; 3,4-dihydroxybenzoate from 3-dehydroquinate: step 1/2. In terms of biological role, is involved in the catabolism of quinate. Allows the utilization of quinate as carbon source via the beta-ketoadipate pathway. This is Catabolic 3-dehydroquinase from Pyricularia oryzae (strain 70-15 / ATCC MYA-4617 / FGSC 8958) (Rice blast fungus).